The primary structure comprises 1011 residues: E3 ubiquitin-protein ligase mib1 (1011 aa).

The MIB/HERC2 1 domain occupies 6-74 (NNRVMVEGVG…AYDLRIMDSA (69 aa)). The ZZ-type zinc finger occupies 80-132 (HDGTMCDTCRQQPIIGIRWKCAECTNYDLCTVCYHGDKHHLRHRFYRITTPGS). Zn(2+)-binding residues include Cys85, Cys88, Cys100, Cys103, Cys109, Cys112, His118, and His122. An MIB/HERC2 2 domain is found at 143–221 (SKKITARGIF…MSDLKCVQDA (79 aa)). ANK repeat units lie at residues 430–460 (DLNE…DVNG), 463–492 (AGHT…DVEA), 496–525 (DGDR…DLNA), 529–558 (RRQT…HPSL), 562–591 (EGDT…DVTI), 595–627 (NGFN…IVDE), 631–661 (DGYT…NLDI), 665–694 (NQQT…KLDI), and 698–729 (DGDT…KVDT). RING-type zinc fingers lie at residues 820–855 (CMVC…LLCK) and 867–902 (CVVC…VQCR). A coiled-coil region spans residues 936-963 (QKDKDNTNVNADVQKLQQQLQDIKEQTM). An RING-type 3 zinc finger spans residues 964-997 (CPVCLDRLKNMIFMCGHGTCQLCGDRMSECPICR).

Its subcellular location is the cytoplasm. The protein resides in the cytoskeleton. It localises to the microtubule organizing center. The protein localises to the centrosome. It is found in the centriolar satellite. The catalysed reaction is S-ubiquitinyl-[E2 ubiquitin-conjugating enzyme]-L-cysteine + [acceptor protein]-L-lysine = [E2 ubiquitin-conjugating enzyme]-L-cysteine + N(6)-ubiquitinyl-[acceptor protein]-L-lysine.. Its pathway is protein modification; protein ubiquitination. E3 ubiquitin-protein ligase that mediates ubiquitination of Delta receptors, which act as ligands of Notch proteins. Positively regulates the Delta-mediated Notch signaling by ubiquitinating the intracellular domain of Delta, leading to endocytosis of Delta receptors. The sequence is that of E3 ubiquitin-protein ligase mib1 (mib1) from Xenopus laevis (African clawed frog).